The following is a 209-amino-acid chain: Ribosomal RNA large subunit methyltransferase E (209 aa).

5 residues coordinate S-adenosyl-L-methionine: G63, W65, D83, D99, and D124. Catalysis depends on K164, which acts as the Proton acceptor.

It belongs to the class I-like SAM-binding methyltransferase superfamily. RNA methyltransferase RlmE family.

It is found in the cytoplasm. It catalyses the reaction uridine(2552) in 23S rRNA + S-adenosyl-L-methionine = 2'-O-methyluridine(2552) in 23S rRNA + S-adenosyl-L-homocysteine + H(+). Functionally, specifically methylates the uridine in position 2552 of 23S rRNA at the 2'-O position of the ribose in the fully assembled 50S ribosomal subunit. This is Ribosomal RNA large subunit methyltransferase E from Pseudoalteromonas atlantica (strain T6c / ATCC BAA-1087).